Consider the following 495-residue polypeptide: 3-octaprenyl-4-hydroxybenzoate carboxy-lyase (495 aa).

Mn(2+) is bound at residue Asn-172. Residues Ile-175–Arg-177, Arg-189–Leu-191, and Arg-194–Gly-195 each bind prenylated FMN. Residue Glu-238 participates in Mn(2+) binding. Asp-287 (proton donor) is an active-site residue.

This sequence belongs to the UbiD family. In terms of assembly, homohexamer. The cofactor is prenylated FMN. Mn(2+) serves as cofactor.

Its subcellular location is the cell membrane. The enzyme catalyses a 4-hydroxy-3-(all-trans-polyprenyl)benzoate + H(+) = a 2-(all-trans-polyprenyl)phenol + CO2. The protein operates within cofactor biosynthesis; ubiquinone biosynthesis. In terms of biological role, catalyzes the decarboxylation of 3-octaprenyl-4-hydroxy benzoate to 2-octaprenylphenol, an intermediate step in ubiquinone biosynthesis. This Yersinia pseudotuberculosis serotype O:1b (strain IP 31758) protein is 3-octaprenyl-4-hydroxybenzoate carboxy-lyase.